The primary structure comprises 779 residues: ATP-dependent RNA helicase SUPV3L1, mitochondrial (779 aa).

The N-terminal 40 residues, 1–40, are a transit peptide targeting the mitochondrion; sequence MSLPRCTLLWARLPAGRGAGPRAAPCSALRALVGSFPGAS. An N6-acetyllysine modification is found at Lys99. One can recognise a Helicase ATP-binding domain in the interval 194-334; that stretch reads EARARQRKII…AINLVSELLY (141 aa). Residue 207-214 coordinates ATP; it reads GPTNSGKT. Positions 353-521 constitute a Helicase C-terminal domain; sequence VLDHALESLD…PTAEQIEMFA (169 aa). The segment at 650 to 779 is interaction with LAMTOR5, important for protein stability; that stretch reads PDSSLVRSLQ…RRKKKDPDSD (130 aa). The span at 693–703 shows a compositional bias: polar residues; that stretch reads SGDQSRLSGAS. Disordered regions lie at residues 693–732 and 754–779; these read SGDQ…KELP and EWLT…PDSD. At Ser725 the chain carries Phosphoserine. Over residues 761–779 the composition is skewed to basic and acidic residues; sequence EHSREKVGTRRKKKDPDSD.

This sequence belongs to the helicase family. Homodimer; in free form. Component of the mitochondrial degradosome (mtEXO) complex which is a heteropentamer containing 2 copies of SUPV3L1 and 3 copies of PNPT1. As part of mitochondrial degradosome complex, interacts with GRSF1 in a RNA-dependent manner; the interaction enhances the activity of the complex. Interacts with LAMTOR5/HBXIP, WRN and BLM. The cofactor is Mg(2+). Requires Mn(2+) as cofactor.

It is found in the nucleus. The protein resides in the mitochondrion matrix. Its subcellular location is the mitochondrion nucleoid. It carries out the reaction ATP + H2O = ADP + phosphate + H(+). Helicase activity toward DNA substrate is inhibited by micromolar concentrations of 5,6-dichloro-1-(beta-D-ribofuranosyl)benzotriazole (DRBT) and 4,5,6,7-tetrabromobenzotriazole (TBBT). Helicase activity toward RNA substrate is inhibited by elevated concentrations of TBBT. Inhibited by some ring-expanded nucleoside analogs. In terms of biological role, major helicase player in mitochondrial RNA metabolism. Component of the mitochondrial degradosome (mtEXO) complex, that degrades 3' overhang double-stranded RNA with a 3'-to-5' directionality in an ATP-dependent manner. Involved in the degradation of non-coding mitochondrial transcripts (MT-ncRNA) and tRNA-like molecules. ATPase and ATP-dependent multisubstrate helicase, able to unwind double-stranded (ds) DNA and RNA, and RNA/DNA heteroduplexes in the 5'-to-3' direction. Plays a role in the RNA surveillance system in mitochondria; regulates the stability of mature mRNAs, the removal of aberrantly formed mRNAs and the rapid degradation of non coding processing intermediates. Also implicated in recombination and chromatin maintenance pathways. May protect cells from apoptosis. Associates with mitochondrial DNA. The polypeptide is ATP-dependent RNA helicase SUPV3L1, mitochondrial (Supv3l1) (Mus musculus (Mouse)).